A 98-amino-acid chain; its full sequence is Integration host factor subunit alpha (98 aa).

Residues F49–I71 form a disordered region.

It belongs to the bacterial histone-like protein family. As to quaternary structure, heterodimer of an alpha and a beta chain.

In terms of biological role, this protein is one of the two subunits of integration host factor, a specific DNA-binding protein that functions in genetic recombination as well as in transcriptional and translational control. The protein is Integration host factor subunit alpha of Shewanella oneidensis (strain ATCC 700550 / JCM 31522 / CIP 106686 / LMG 19005 / NCIMB 14063 / MR-1).